The following is a 735-amino-acid chain: MPRQDPAVTPELVASHGLKPDEYQRILDLIGRVPTFTELGIFSAMWNEHCSYKSSRLHLRALPTKAPWVIQGPGENAGVIDIGDGEACVFKMESHNHPSYIEPFQGAATGVGGILRDVFTMGARPVACLNLLRFGAPEHPKTRHLVSGVVAGIGSYGNSFGVPTVGGATAFHMGYDGNILVNAMAVGIARADEIFYAKATGIGNPIVYLGSKTGRDGIHGATMASAAFEEDAEAKRPTVQVGDPFTEKLLLEACLELMRTGAVIAIQDMGAAGLTSSAVEMGAKGDLGIELDLDAVPCRETGMSAYEMLLSESQERMLMVLDPQKEAEAKAVFVKWGLDFAIIGKTTDTLRFVVKHEGEVKADLPIKQLGDAAPLYDRPHIASPALEKIEAAAIEPPLSNAGALALLLATPDLCSKRWIYEQYDHLILGNSVETPGGDAAVIRLGDGPKGLALTTDVTPRYCEADPVAGGRQAVAEAWRNLTAVGALPRAVTDNLNFGNPEKPEIMGQFVGCLTGIGEACRALDFPIVSGNVSLYNESSGKGIPPTPSIGGVGVIADVGLAAKLAFRRAGDAILLIGDTEGWLGQSLYLRDVCGREAGAPPPVDLAAEKRNGDFVRELIRAALVSAVHDISDGGLAVALAEMAMAGGVGASVEAPANVPAHGFWFGEDQSRYIVATSPERALGVLAAAQRAGVPCRRIGETGGAALTLKGEAAILIADLSARFEGWLPDYMAAAL.

H49 is an active-site residue. Residues Y52 and K91 each contribute to the ATP site. Residue E93 participates in Mg(2+) binding. Substrate is bound by residues 94 to 97 (SHNH) and R116. The Proton acceptor role is filled by H95. D117 contacts Mg(2+). Q240 contributes to the substrate binding site. D268 provides a ligand contact to Mg(2+). Position 312–314 (312–314 (ESQ)) interacts with substrate. The ATP site is built by D493 and G530. Position 531 (N531) interacts with Mg(2+). S533 contributes to the substrate binding site.

This sequence belongs to the FGAMS family. Monomer. Part of the FGAM synthase complex composed of 1 PurL, 1 PurQ and 2 PurS subunits.

The protein localises to the cytoplasm. The catalysed reaction is N(2)-formyl-N(1)-(5-phospho-beta-D-ribosyl)glycinamide + L-glutamine + ATP + H2O = 2-formamido-N(1)-(5-O-phospho-beta-D-ribosyl)acetamidine + L-glutamate + ADP + phosphate + H(+). It participates in purine metabolism; IMP biosynthesis via de novo pathway; 5-amino-1-(5-phospho-D-ribosyl)imidazole from N(2)-formyl-N(1)-(5-phospho-D-ribosyl)glycinamide: step 1/2. Part of the phosphoribosylformylglycinamidine synthase complex involved in the purines biosynthetic pathway. Catalyzes the ATP-dependent conversion of formylglycinamide ribonucleotide (FGAR) and glutamine to yield formylglycinamidine ribonucleotide (FGAM) and glutamate. The FGAM synthase complex is composed of three subunits. PurQ produces an ammonia molecule by converting glutamine to glutamate. PurL transfers the ammonia molecule to FGAR to form FGAM in an ATP-dependent manner. PurS interacts with PurQ and PurL and is thought to assist in the transfer of the ammonia molecule from PurQ to PurL. The sequence is that of Phosphoribosylformylglycinamidine synthase subunit PurL from Methylocella silvestris (strain DSM 15510 / CIP 108128 / LMG 27833 / NCIMB 13906 / BL2).